The primary structure comprises 177 residues: Decaprenylphosphoryl-5-phosphoribose phosphatase (177 aa).

A run of 4 helical transmembrane segments spans residues 35 to 55 (HFGE…IALP), 62 to 82 (LVAG…KRLV), 124 to 144 (GLPL…LLGV), and 150 to 170 (VAVG…VGGG).

The protein belongs to the PA-phosphatase related phosphoesterase family.

Its subcellular location is the cell membrane. The catalysed reaction is trans,octa-cis-decaprenylphospho-beta-D-ribofuranose 5-phosphate + H2O = trans,octa-cis-decaprenylphospho-beta-D-ribofuranose + phosphate. It participates in cell wall biogenesis; cell wall polysaccharide biosynthesis. Functionally, phosphatase involved in the biosynthesis of decaprenylphosphoryl arabinose (DPA), which serves as the arabinose donor for the biosynthesis of arabinogalactan, the major mycobacterial cell wall polysaccharide. Catalyzes the dephosphorylation of decaprenylphosphoryl-5-phosphoribose (DPPR) to decaprenyl-phosphoribose (DPR). This is Decaprenylphosphoryl-5-phosphoribose phosphatase from Mycobacterium tuberculosis (strain CDC 1551 / Oshkosh).